Consider the following 631-residue polypeptide: Integrator complex subunit 10 (631 aa).

Residues 545-570 (FELTSSPNSSGTPTATTVAGGSQSRR) are compositionally biased toward polar residues. Residues 545 to 577 (FELTSSPNSSGTPTATTVAGGSQSRRIGTRGAD) form a disordered region.

Belongs to the Integrator subunit 10 family. As to quaternary structure, belongs to the multiprotein complex Integrator, at least composed of IntS1, IntS2, IntS3, IntS4, omd/IntS5, IntS6, defl/IntS7, IntS8, IntS9, IntS10, IntS11, IntS12, asun/IntS13, IntS14 and IntS15. The core complex associates with protein phosphatase 2A subunits mts/PP2A and Pp2A-29B, to form the Integrator-PP2A (INTAC) complex.

The protein localises to the nucleus. Component of the integrator complex, a multiprotein complex that terminates RNA polymerase II (Pol II) transcription in the promoter-proximal region of genes. The integrator complex provides a quality checkpoint during transcription elongation by driving premature transcription termination of transcripts that are unfavorably configured for transcriptional elongation: the complex terminates transcription by (1) catalyzing dephosphorylation of the C-terminal domain (CTD) of Pol II subunit Polr2A/Rbp1 and Spt5, and (2) degrading the exiting nascent RNA transcript via endonuclease activity. The integrator complex is also involved in the 3'-end processing of the U7 snRNA, and also the spliceosomal snRNAs U1, U2, U4 and U5. This is Integrator complex subunit 10 from Drosophila melanogaster (Fruit fly).